A 536-amino-acid polypeptide reads, in one-letter code: Caspase recruitment domain-containing protein 9 (536 aa).

Position 2 is a phosphoserine (serine 2). Residues aspartate 3, cysteine 10, and histidine 73 each contribute to the Zn(2+) site. Positions 6-98 constitute a CARD domain; that stretch reads NDDECWSVLE…QLYKKVTGKE (93 aa). The segment at 99–116 is linker; sequence PARVFSMIIDASGESGLT. Coiled-coil stretches lie at residues 117-277 and 332-419; these read QLLM…DRSS and LRKD…QQLE. A Glycyl lysine isopeptide (Lys-Gly) (interchain with G-Cter in ubiquitin) cross-link involves residue lysine 125. Threonine 231 bears the Phosphothreonine mark. Serine 277 is modified (phosphoserine). Serine 424, serine 425, serine 431, serine 450, serine 460, serine 483, and serine 498 each carry phosphoserine. The tract at residues 427–536 is disordered; it reads LEDGSPRRSQ…GSDNTDTEGS (110 aa). The segment covering 487-502 has biased composition (basic and acidic residues); that stretch reads PPEKERRRLKESFENY. Residues 503 to 513 are compositionally biased toward basic residues; it reads RRKRALRKMQK. Residues threonine 531 and threonine 533 each carry the phosphothreonine; by CK2 modification.

Monomer. Homodimer; homodimerization is mediated by the CARD domain which forms an extensive interaction with the adjacent linker and coiled-coil regions; leads to an autoinhibited state. Homomultimer; polymerizes following activation, forming a nucleating helical template that seeds BCL10-filament formation via a CARD-CARD interaction. Interacts (via CARD domain) with BCL10 (via CARD domain); interaction takes place following CARD9 activation and polymerization, leading to the formation of a filamentous CBM complex assembly. Component of a CBM complex (CARD9-BCL10, MALT1), composed of CARD9, BCL10 and MALT1. Interacts with RASGRF1. Interacts with NOD2 (via NACHT domain); interaction is direct. Interacts with RIPK2. Interacts with VHL; without leading to protein degradation. Post-translationally, phosphorylated at Thr-231 by PRKCD downstream of C-type lectin receptors activation: phosphorylation promotes interaction with BCL10, followed by activation of NF-kappa-B and MAP kinase p38 pathways. Phosphorylated at Thr-531 and Thr-533 by CK2 following interaction with VHL, leading to inhibit the ability to activate NF-kappa-B. In terms of processing, ubiquitinated at Lys-125 via 'Lys-27'-linked ubiquitin by TRIM62 downstream of C-type lectin receptors activation; leading to CARD9 activation, followed by activation of NF-kappa-B and MAP kinase p38 pathways. Deubiquitinated at Lys-125 by USP15, inhibiting CARD9. Expression is restricted to several populations of phagocytes, such as macrophages, monocytes, and dendritic cells. Highly expressed in spleen. Also detected in liver, placenta, lung, peripheral blood leukocytes and in brain.

It is found in the cytoplasm. Its activity is regulated as follows. Maintained in an autoinhibited state via homodimerization in which the CARD domain forms an extensive interaction with the adjacent linker and coiled-coil regions. Activation downstream of C-type lectin receptors, by phosphorylation by PRKCD and/or ubiquitination by TRIM62, triggers disruption of the CARD domain-coiled coil interface, CARD9 homooligomerization and BCL10 recruitment, followed by activation of NF-kappa-B and MAP kinase p38 pathways. Zinc-binding inhibits activation by stabilizing the CARD ground-state conformation and restricting its capacity to form BCL10-nucleating filaments. Adapter protein that plays a key role in innate immune response against fungi by forming signaling complexes downstream of C-type lectin receptors. CARD9-mediated signals are essential for antifungal immunity against a subset of fungi from the phylum Ascomycota. Transduces signals in myeloid cells downstream of C-type lectin receptors CLEC7A (dectin-1), CLEC6A (dectin-2) and CLEC4E (Mincle), which detect pathogen-associated molecular pattern metabolites (PAMPs), such as fungal carbohydrates, and trigger CARD9 activation. Upon activation, CARD9 homooligomerizes to form a nucleating helical template that recruits BCL10 via CARD-CARD interaction, thereby promoting polymerization of BCL10 and subsequent recruitment of MALT1: this leads to activation of NF-kappa-B and MAP kinase p38 (MAPK11, MAPK12, MAPK13 and/or MAPK14) pathways which stimulate expression of genes encoding pro-inflammatory cytokines and chemokines. CARD9 signaling in antigen-presenting cells links innate sensing of fungi to the activation of adaptive immunity and provides a cytokine milieu that induces the development and subsequent of interleukin 17-producing T helper (Th17) cells. Also involved in activation of myeloid cells via classical ITAM-associated receptors and TLR: required for TLR-mediated activation of MAPK, while it is not required for TLR-induced activation of NF-kappa-B. CARD9 can also be engaged independently of BCL10: forms a complex with RASGRF1 downstream of C-type lectin receptors, which recruits and activates HRAS, leading to ERK activation and the production of cytokines. Acts as an important regulator of the intestinal commensal fungi (mycobiota) component of the gut microbiota. Plays an essential role in antifungal immunity against dissemination of gut fungi: acts by promoting induction of antifungal IgG antibodies response in CX3CR1(+) macrophages to confer protection against disseminated C.albicans or C.auris infection. Also mediates immunity against other pathogens, such as certain bacteria, viruses and parasites; CARD9 signaling is however redundant with other innate immune responses. In response to L.monocytogenes infection, required for the production of inflammatory cytokines activated by intracellular peptidoglycan: acts by connecting NOD2 recognition of peptidoglycan to downstream activation of MAP kinases (MAPK) without activating NF-kappa-B. The protein is Caspase recruitment domain-containing protein 9 of Homo sapiens (Human).